We begin with the raw amino-acid sequence, 332 residues long: Elongin-A (332 aa).

The F-box domain maps to 24–68 (LEDIGHMPYALVRRVLLKMSAEQLLRLERASPALLLEDEEAWQQL). Residues 228-332 (TPSAQPAASL…KPRVYIHTPR (105 aa)) form a disordered region. A compositionally biased stretch (polar residues) spans 296 to 309 (LFSSPALSTLLPQQ). Residues 320–332 (PPKKPRVYIHTPR) are compositionally biased toward basic residues.

This sequence belongs to the ELA1 family. Heterodimer with ELC1. Component of a CRL3 E3 ubiquitin ligase complex consisting of a cullin, the linker protein ELC1, the substrate receptor ELA1, and a RING protein. Interacts with the large RNA polymerase II subunit RPO21 in a manner dependent on DEF1.

Functionally, as part of the CRL3 E3 ubiquitin ligase complex; polyubiquitylates monoubiquitylated RNA polymerase II subunit RPO21 to trigger its proteolysis; plays a role in global genomic repair. The chain is Elongin-A (ELA1) from Eremothecium gossypii (strain ATCC 10895 / CBS 109.51 / FGSC 9923 / NRRL Y-1056) (Yeast).